Here is a 200-residue protein sequence, read N- to C-terminus: Proteasome subunit beta 2 (200 aa).

A propeptide spans 1 to 10 (removed in mature form; by autocatalysis); sequence MSDQLELMTG. Thr11 acts as the Nucleophile in catalysis.

Belongs to the peptidase T1B family. The 20S proteasome core is composed of 14 alpha and 14 beta subunits that assemble into four stacked heptameric rings, resulting in a barrel-shaped structure. The two inner rings, each composed of seven catalytic beta subunits, are sandwiched by two outer rings, each composed of seven alpha subunits. The catalytic chamber with the active sites is on the inside of the barrel. Has a gated structure, the ends of the cylinder being occluded by the N-termini of the alpha-subunits. Is capped at one or both ends by the proteasome regulatory ATPase, PAN.

It is found in the cytoplasm. The catalysed reaction is Cleavage of peptide bonds with very broad specificity.. The formation of the proteasomal ATPase PAN-20S proteasome complex, via the docking of the C-termini of PAN into the intersubunit pockets in the alpha-rings, triggers opening of the gate for substrate entry. Interconversion between the open-gate and close-gate conformations leads to a dynamic regulation of the 20S proteasome proteolysis activity. In terms of biological role, component of the proteasome core, a large protease complex with broad specificity involved in protein degradation. This is Proteasome subunit beta 2 from Caldivirga maquilingensis (strain ATCC 700844 / DSM 13496 / JCM 10307 / IC-167).